A 283-amino-acid polypeptide reads, in one-letter code: 9,11-endoperoxide prostaglandin H2 reductase (283 aa).

NADP(+) contacts are provided by residues 23-24 (VW) and Asp-48. Tyr-53 functions as the Proton donor in the catalytic mechanism. His-111 lines the substrate pocket. NADP(+)-binding positions include 140-141 (SN), Gln-162, 188-193 (WSPLGS), 234-236 (KST), and 240-244 (RIQEN). The tract at residues 264-283 (NEDKRIGGDPDNFFPGGEEA) is disordered.

This sequence belongs to the aldo/keto reductase family. In terms of assembly, monomer.

It is found in the cytoplasm. It carries out the reaction prostaglandin F2alpha + NADP(+) = prostaglandin H2 + NADPH + H(+). The protein operates within lipid metabolism; prostaglandin biosynthesis. Catalyzes the NADP-dependent formation of prostaglandin F2-alpha from prostaglandin H2. Also has aldo/ketoreductase activity towards the synthetic substrates 9,10-phenanthrenequinone and p-nitrobenzaldehyde. This Trypanosoma cruzi (strain CL Brener) protein is 9,11-endoperoxide prostaglandin H2 reductase.